The following is a 135-amino-acid chain: MPTINQLVRKGRHSKTTKSDSPALNYAYNSMKKKMNYNPAPQMRGVATRVGTMTPKKPNSALRKYARVRLSNLIEVTAYIPGIGHNLQEHSVVLIRGGRVKDLPGVRYHIIRGALDTAGVDGRKQGRSKYGAKKG.

Residues 1–23 are disordered; sequence MPTINQLVRKGRHSKTTKSDSPA. Asp102 is subject to 3-methylthioaspartic acid.

Belongs to the universal ribosomal protein uS12 family. Part of the 30S ribosomal subunit. Contacts proteins S8 and S17. May interact with IF1 in the 30S initiation complex.

Its function is as follows. With S4 and S5 plays an important role in translational accuracy. Interacts with and stabilizes bases of the 16S rRNA that are involved in tRNA selection in the A site and with the mRNA backbone. Located at the interface of the 30S and 50S subunits, it traverses the body of the 30S subunit contacting proteins on the other side and probably holding the rRNA structure together. The combined cluster of proteins S8, S12 and S17 appears to hold together the shoulder and platform of the 30S subunit. The protein is Small ribosomal subunit protein uS12 of Lactobacillus gasseri (strain ATCC 33323 / DSM 20243 / BCRC 14619 / CIP 102991 / JCM 1131 / KCTC 3163 / NCIMB 11718 / NCTC 13722 / AM63).